Here is a 262-residue protein sequence, read N- to C-terminus: LOB domain-containing protein 18 (262 aa).

In terms of domain architecture, LOB spans 36–138 (GPCGACKFLR…AEVSYLQAHL (103 aa)). Residues 223–262 (VGLGGENSHDLQALAHELLHRQGSPPPAATDHSPSRTMSR) form a disordered region.

It belongs to the LOB domain-containing protein family. Homodimer and heterodimer with LBD16. Interacts with GIP1. Expressed in roots, stems, leaves and flowers. Expressed in vascular tissues of hypocotyls, leaves, roots, developing floral organs and siliques.

It is found in the nucleus. Functionally, involved in the positive regulation of tracheary element (TE) differentiation. Involved in a positive feedback loop that maintains or promotes NAC030/VND7 expression that regulates TE differentiation-related genes. Functions in the initiation and emergence of lateral roots, in conjunction with LBD16, downstream of ARF7 and ARF19. Transcriptional activator that directly regulates EXPA14, a gene encoding a cell wall-loosening factor that promotes lateral root emergence. Activates EXPA14 by directly binding to a specific region of its promoter. Transcriptional activator that directly regulates EXPA17, a gene encoding a cell wall-loosening factor that promotes lateral root emergence. Acts downstream of the auxin influx carriers AUX1 and LAX1 in the regulation of lateral root initiation and development. The protein is LOB domain-containing protein 18 (LBD18) of Arabidopsis thaliana (Mouse-ear cress).